A 463-amino-acid chain; its full sequence is Glycine--tRNA ligase (463 aa).

Residues Arg-100 and Glu-175 each contribute to the substrate site. ATP contacts are provided by residues Arg-207–Glu-209, Phe-217–Phe-222, Glu-291–Leu-292, and Gly-335–Arg-338. Phe-222–Glu-226 contacts substrate. A substrate-binding site is contributed by Glu-331–Gly-335.

Belongs to the class-II aminoacyl-tRNA synthetase family. Homodimer.

The protein resides in the cytoplasm. The catalysed reaction is tRNA(Gly) + glycine + ATP = glycyl-tRNA(Gly) + AMP + diphosphate. Catalyzes the attachment of glycine to tRNA(Gly). In Clostridium tetani (strain Massachusetts / E88), this protein is Glycine--tRNA ligase.